A 192-amino-acid polypeptide reads, in one-letter code: Thymidine kinase (192 aa).

ATP-binding positions include 9–16 (SSMNAGKS) and 87–90 (DEAQ). The active-site Proton acceptor is E88. 4 residues coordinate Zn(2+): C145, C147, C182, and H185.

This sequence belongs to the thymidine kinase family. In terms of assembly, homotetramer.

It localises to the cytoplasm. It carries out the reaction thymidine + ATP = dTMP + ADP + H(+). The protein is Thymidine kinase of Colwellia psychrerythraea (strain 34H / ATCC BAA-681) (Vibrio psychroerythus).